A 1175-amino-acid chain; its full sequence is 1-phosphatidylinositol 4,5-bisphosphate phosphodiesterase beta-4 (1175 aa).

A2 carries the post-translational modification N-acetylalanine. The PI-PLC X-box domain occupies 313 to 463 (QEMDHPLAHY…LKRKILIKNK (151 aa)). Residues H328 and H375 contribute to the active site. The disordered stretch occupies residues 482–511 (EAGESASPANILEDDNEEEIESADQEEEAH). Over residues 493 to 508 (LEDDNEEEIESADQEE) the composition is skewed to acidic residues. The 117-residue stretch at 565–681 (LSTMINYAQP…GYLLKPDFMR (117 aa)) folds into the PI-PLC Y-box domain. A C2 domain is found at 684-809 (DRTFDPFSET…SLRNEGNKPL (126 aa)). 2 disordered regions span residues 863-895 (ADVP…ELRP) and 1082-1110 (KISM…VREL). Composition is skewed to polar residues over residues 881–895 (AKAN…ELRP) and 1085–1094 (MENSKAISQD). T886 is subject to Phosphothreonine. Basic and acidic residues predominate over residues 1095 to 1109 (KSIKNKAERERRVRE).

The cofactor is Ca(2+). In terms of tissue distribution, preferentially expressed in the retina.

It is found in the cell membrane. The catalysed reaction is a 1,2-diacyl-sn-glycero-3-phospho-(1D-myo-inositol-4,5-bisphosphate) + H2O = 1D-myo-inositol 1,4,5-trisphosphate + a 1,2-diacyl-sn-glycerol + H(+). The enzyme catalyses a 1,2-diacyl-sn-glycero-3-phospho-(1D-myo-inositol) + H2O = 1D-myo-inositol 1-phosphate + a 1,2-diacyl-sn-glycerol + H(+). In terms of biological role, activated phosphatidylinositol-specific phospholipase C enzymes catalyze the production of the second messenger molecules diacylglycerol (DAG) and inositol 1,4,5-trisphosphate (IP3) involved in G-protein coupled receptor signaling pathways. PLCB4 is a direct effector of the endothelin receptor signaling pathway that plays an essential role in lower jaw and middle ear structures development. In Homo sapiens (Human), this protein is 1-phosphatidylinositol 4,5-bisphosphate phosphodiesterase beta-4.